The chain runs to 438 residues: Trigger factor (438 aa).

Positions 160–245 (DDKVTIDFVG…VKKIQQAELP (86 aa)) constitute a PPIase FKBP-type domain.

This sequence belongs to the FKBP-type PPIase family. Tig subfamily.

The protein resides in the cytoplasm. The catalysed reaction is [protein]-peptidylproline (omega=180) = [protein]-peptidylproline (omega=0). Its function is as follows. Involved in protein export. Acts as a chaperone by maintaining the newly synthesized protein in an open conformation. Functions as a peptidyl-prolyl cis-trans isomerase. This is Trigger factor from Francisella tularensis subsp. mediasiatica (strain FSC147).